We begin with the raw amino-acid sequence, 469 residues long: Argininosuccinate lyase (469 aa).

It belongs to the lyase 1 family. Argininosuccinate lyase subfamily.

Its subcellular location is the cytoplasm. The catalysed reaction is 2-(N(omega)-L-arginino)succinate = fumarate + L-arginine. The protein operates within amino-acid biosynthesis; L-arginine biosynthesis; L-arginine from L-ornithine and carbamoyl phosphate: step 3/3. This is Argininosuccinate lyase from Saccharophagus degradans (strain 2-40 / ATCC 43961 / DSM 17024).